We begin with the raw amino-acid sequence, 431 residues long: 5-methylthioadenosine/S-adenosylhomocysteine deaminase (431 aa).

Residues H64 and H66 each coordinate Zn(2+). Substrate-binding residues include E93, R145, and H183. Position 210 (H210) interacts with Zn(2+). Substrate-binding residues include E213 and D299. D299 provides a ligand contact to Zn(2+).

Belongs to the metallo-dependent hydrolases superfamily. MTA/SAH deaminase family. It depends on Zn(2+) as a cofactor.

The catalysed reaction is S-adenosyl-L-homocysteine + H2O + H(+) = S-inosyl-L-homocysteine + NH4(+). It carries out the reaction S-methyl-5'-thioadenosine + H2O + H(+) = S-methyl-5'-thioinosine + NH4(+). Functionally, catalyzes the deamination of 5-methylthioadenosine and S-adenosyl-L-homocysteine into 5-methylthioinosine and S-inosyl-L-homocysteine, respectively. Is also able to deaminate adenosine. In Syntrophomonas wolfei subsp. wolfei (strain DSM 2245B / Goettingen), this protein is 5-methylthioadenosine/S-adenosylhomocysteine deaminase.